The following is a 188-amino-acid chain: Mediator of RNA polymerase II transcription subunit 29 (188 aa).

Composition is skewed to low complexity over residues 1–23 (MNPN…QSSP) and 30–43 (VQHQ…PLQQ). Positions 1–43 (MNPNMNMMPMSGPQMMQVMQSSPSGPPGPVQHQQQQPPQPLQQ) are disordered.

Belongs to the Mediator complex subunit 29 family. Component of the Mediator complex. Self-associates. Interacts with dsx.

The protein resides in the nucleus. Its function is as follows. Component of the Mediator complex, a coactivator involved in the regulated transcription of nearly all RNA polymerase II-dependent genes. Mediator functions as a bridge to convey information from gene-specific regulatory proteins to the basal RNA polymerase II transcription machinery. Mediator is recruited to promoters by direct interactions with regulatory proteins and serves as a scaffold for the assembly of a functional preinitiation complex with RNA polymerase II and the general transcription factors. Required for female somatic sexual development. The chain is Mediator of RNA polymerase II transcription subunit 29 (ix) from Drosophila melanogaster (Fruit fly).